A 461-amino-acid polypeptide reads, in one-letter code: Thyroid hormone receptor beta (461 aa).

The segment at 1-24 (MTPNSMTENGLPAWDKQKPRPDRG) is disordered. The tract at residues 1–106 (MTPNSMTENG…IPSYLDKDEL (106 aa)) is modulating. The span at 15–24 (DKQKPRPDRG) shows a compositional bias: basic and acidic residues. Residues C107, C110, C124, C127, C145, C151, C161, and C164 each contribute to the Zn(2+) site. NR C4-type zinc fingers lie at residues 107-127 (CVVCGDKATGYHYRCITCEGC) and 145-169 (CKYEGKCIIDKVTRNQCQECRFKKC). The nuclear receptor DNA-binding region spans 107 to 181 (CVVCGDKATG…VGMATDLVLD (75 aa)). The NR LBD domain maps to 217 to 461 (EEWELIKTVT…PPLFLEVFED (245 aa)). An interaction with NR2F6 region spans residues 244-461 (KFLPEDIGQA…PPLFLEVFED (218 aa)). 3,3',5-triiodo-L-thyronine contacts are provided by R282, N331, and H435. Residues R282, N331, and H435 each contribute to the L-thyroxine site.

It belongs to the nuclear hormone receptor family. NR1 subfamily. In terms of assembly, binds DNA as a dimer; homodimer and heterodimer with RXRB. Interacts with the coactivators NCOA1/SRC1, NCOA2/GRIP1, NCOA7 and MED1/TRAP220 in a ligand-inducible manner. Interacts with the corepressor NCOR1 in absence of ligand. Interacts with C1D. Interacts with NR2F6; the interaction impairs the binding of the THRB homodimer and THRB:RXRB heterodimer to T3 response elements. Interacts with PRMT2 and THRSP. Interacts with TACC1; this interaction is decreased in the presence of thyroid hormone T3.

The protein resides in the nucleus. In terms of biological role, nuclear hormone receptor that can act as a repressor or activator of transcription. High affinity receptor for thyroid hormones, including triiodothyronine and thyroxine. This chain is Thyroid hormone receptor beta (Thrb), found in Mus musculus (Mouse).